The following is a 252-amino-acid chain: Probable endonuclease 4 (252 aa).

9 residues coordinate Zn(2+): histidine 56, histidine 96, glutamate 129, aspartate 162, histidine 165, histidine 191, aspartate 204, histidine 206, and glutamate 233.

It belongs to the AP endonuclease 2 family. Requires Zn(2+) as cofactor.

The enzyme catalyses Endonucleolytic cleavage to 5'-phosphooligonucleotide end-products.. In terms of biological role, endonuclease IV plays a role in DNA repair. It cleaves phosphodiester bonds at apurinic or apyrimidinic (AP) sites, generating a 3'-hydroxyl group and a 5'-terminal sugar phosphate. The polypeptide is Probable endonuclease 4 (Mycobacterium ulcerans (strain Agy99)).